Reading from the N-terminus, the 238-residue chain is tRNA (guanine-N(7)-)-methyltransferase (238 aa).

S-adenosyl-L-methionine contacts are provided by Glu-68, Glu-93, Asp-120, and Asp-143. The active site involves Asp-143. Substrate contacts are provided by residues Lys-147, Asp-179, and 216–219; that span reads TKFE.

Belongs to the class I-like SAM-binding methyltransferase superfamily. TrmB family.

The enzyme catalyses guanosine(46) in tRNA + S-adenosyl-L-methionine = N(7)-methylguanosine(46) in tRNA + S-adenosyl-L-homocysteine. Its pathway is tRNA modification; N(7)-methylguanine-tRNA biosynthesis. Functionally, catalyzes the formation of N(7)-methylguanine at position 46 (m7G46) in tRNA. This chain is tRNA (guanine-N(7)-)-methyltransferase, found in Marinobacter nauticus (strain ATCC 700491 / DSM 11845 / VT8) (Marinobacter aquaeolei).